A 373-amino-acid polypeptide reads, in one-letter code: MNKFFVFPLLLILNSIVLVKSLTENLRVSRYSKPGVSTIILKGGYINRQFIGEISIGNPPQSFKVLFDTGSTNLWIPSKNCYAKACYNKKKYDYNISKNYRISSSKNPVNIFFGTGKVQIAYATDDIHLGSIKVRNQEFGIANYMSDDPFSDMQFDGLFGLGISEDIKRKGLIYDNIPRNSSRKNVFSIYYPKSVDDNGAITFGGYDKKYIEPNSNIDWFVVSSRKYWTIKMTGIKINGLFLEVCSGNIEGYCDAVIDTGTSSIAGPQNDLILLTKLLNPVKSCQNKTLLKNFSFVFSDENGVEKEYELTSNDYIVNSFKVDPILKNPCNFAFMPINISSPNGYLYILGQVFLQKYYAIFEKDNMRIGLAKSI.

The first 21 residues, 1–21, serve as a signal peptide directing secretion; that stretch reads MNKFFVFPLLLILNSIVLVKS. One can recognise a Peptidase A1 domain in the interval 50-370; that stretch reads FIGEISIGNP…EKDNMRIGLA (321 aa). Active-site residues include Asp68 and Asp258.

The protein belongs to the peptidase A1 family.

Functionally, during the development in the mosquito vector, plays an essential role in sporozoite egress from the oocyst and sporozoite gliding motility, which is required for the invasion of salivary glands and subsequent transmission to the host. The sequence is that of Plasmepsin VIII from Plasmodium berghei (strain Anka).